Consider the following 691-residue polypeptide: Elongation factor G (691 aa).

In terms of domain architecture, tr-type G spans 6 to 281; sequence SKYRNIGIMA…GVVDFLPSPI (276 aa). GTP-binding positions include 15 to 22, 79 to 83, and 133 to 136; these read AHIDAGKT, DTPGH, and NKMD.

The protein belongs to the TRAFAC class translation factor GTPase superfamily. Classic translation factor GTPase family. EF-G/EF-2 subfamily.

It localises to the cytoplasm. Functionally, catalyzes the GTP-dependent ribosomal translocation step during translation elongation. During this step, the ribosome changes from the pre-translocational (PRE) to the post-translocational (POST) state as the newly formed A-site-bound peptidyl-tRNA and P-site-bound deacylated tRNA move to the P and E sites, respectively. Catalyzes the coordinated movement of the two tRNA molecules, the mRNA and conformational changes in the ribosome. This is Elongation factor G from Wolbachia pipientis wMel.